The sequence spans 313 residues: 4-diphosphocytidyl-2-C-methyl-D-erythritol kinase (313 aa).

Lysine 29 is a catalytic residue. ATP is bound at residue 113–123; the sequence is PMGGGVGGGSS. The active site involves aspartate 155.

It belongs to the GHMP kinase family. IspE subfamily.

The catalysed reaction is 4-CDP-2-C-methyl-D-erythritol + ATP = 4-CDP-2-C-methyl-D-erythritol 2-phosphate + ADP + H(+). It functions in the pathway isoprenoid biosynthesis; isopentenyl diphosphate biosynthesis via DXP pathway; isopentenyl diphosphate from 1-deoxy-D-xylulose 5-phosphate: step 3/6. Catalyzes the phosphorylation of the position 2 hydroxy group of 4-diphosphocytidyl-2C-methyl-D-erythritol. The sequence is that of 4-diphosphocytidyl-2-C-methyl-D-erythritol kinase from Haemophilus influenzae (strain ATCC 51907 / DSM 11121 / KW20 / Rd).